The primary structure comprises 520 residues: TnpB-like protein L79 (520 aa).

Over residues 21 to 47 (GSKTKKKVFVKKKPPDKKPLKKPVKKT) the composition is skewed to basic residues. Positions 21–52 (GSKTKKKVFVKKKPPDKKPLKKPVKKTVKTDK) are disordered. The Zn(2+) site is built by C474, C477, C491, and C494.

This sequence in the central section; belongs to the transposase 2 family. It in the C-terminal section; belongs to the transposase 35 family.

In Acanthamoeba polyphaga mimivirus (APMV), this protein is TnpB-like protein L79.